A 582-amino-acid polypeptide reads, in one-letter code: Threonine--tRNA ligase (582 aa).

Residues 185 to 478 (DHRKLGKELD…LVEHYGGAFP (294 aa)) form a catalytic region. Residues Cys-278, His-329, and His-455 each coordinate Zn(2+).

It belongs to the class-II aminoacyl-tRNA synthetase family. Homodimer. Requires Zn(2+) as cofactor.

Its subcellular location is the cytoplasm. It catalyses the reaction tRNA(Thr) + L-threonine + ATP = L-threonyl-tRNA(Thr) + AMP + diphosphate + H(+). In terms of biological role, catalyzes the attachment of threonine to tRNA(Thr) in a two-step reaction: L-threonine is first activated by ATP to form Thr-AMP and then transferred to the acceptor end of tRNA(Thr). Also edits incorrectly charged L-seryl-tRNA(Thr). The sequence is that of Threonine--tRNA ligase from Borrelia garinii subsp. bavariensis (strain ATCC BAA-2496 / DSM 23469 / PBi) (Borreliella bavariensis).